Reading from the N-terminus, the 757-residue chain is Inhibitor of nuclear factor kappa-B kinase subunit beta (757 aa).

A Protein kinase domain is found at 15–300 (WEMKERLGTG…DPQYGPNGCF (286 aa)). ATP contacts are provided by residues 21-29 (LGTGGFGNV) and lysine 44. The active-site Proton acceptor is aspartate 145. Lysine 163 is covalently cross-linked (Glycyl lysine isopeptide (Lys-Gly) (interchain with G-Cter in ubiquitin)). The residue at position 177 (serine 177) is a Phosphoserine; by TBK1 and PKC/PRKCZ. At cysteine 179 the chain carries S-nitrosocysteine. Serine 181 carries the post-translational modification Phosphoserine; by TBK1, PKC/PRKCZ and PDPK1. Proline 191 carries the hydroxyproline modification. Residues 458-479 (LLRNNSCLSKMKNAMASTAQQL) form a leucine-zipper region. Serine 670 is modified (phosphoserine; by autocatalysis). Serine 672 is subject to Phosphoserine. Phosphoserine; by autocatalysis is present on residues serine 675, serine 682, serine 689, serine 692, serine 697, serine 705, serine 733, and serine 740. Residues 682–703 (SHPGHLMSQPSSACDSLPDSDK) form a disordered region. Positions 737–742 (LDWSWL) are NEMO-binding.

The protein belongs to the protein kinase superfamily. Ser/Thr protein kinase family. I-kappa-B kinase subfamily. Component of the I-kappa-B-kinase (IKK) core complex consisting of CHUK, IKBKB and IKBKG; probably four alpha/CHUK-beta/IKBKB dimers are associated with four gamma/IKBKG subunits. The IKK core complex seems to associate with regulatory or adapter proteins to form a IKK-signalosome holo-complex. The IKK complex associates with TERF2IP/RAP1, leading to promote IKK-mediated phosphorylation of RELA/p65. Part of a complex composed of NCOA2, NCOA3, CHUK/IKKA, IKBKB, IKBKG and CREBBP. Part of a 70-90 kDa complex at least consisting of CHUK/IKKA, IKBKB, NFKBIA, RELA, ELP1 and MAP3K14. Found in a membrane raft complex, at least composed of BCL10, CARD11, DPP4 and IKBKB. Interacts with SQSTM1 through PRKCZ or PRKCI. Forms an NGF-induced complex with IKBKB, PRKCI and TRAF6. May interact with MAVS/IPS1. Interacts with NALP2. Interacts with TICAM1. Interacts with FAF1; the interaction disrupts the IKK complex formation. Interacts with ATM. Part of a ternary complex consisting of TANK, IKBKB and IKBKG. Interacts with NIBP; the interaction is direct. Interacts with ARRB1 and ARRB2. Interacts with TRIM21. Interacts with NLRC5; prevents IKBKB phosphorylation and kinase activity. Interacts with PDPK1. Interacts with EIF2AK2/PKR. The phosphorylated form interacts with PPM1A and PPM1B. Interacts with ZNF268 isoform 2; the interaction is further increased in a TNF-alpha-dependent manner. Interacts with IKBKE. Interacts with ZC3H12A. Interacts with AKAP13. Interacts with LRRC14; disrupts IKBKB-IKBKG interaction preventing I-kappa-B-kinase (IKK) core complex formation and leading to a decrease of IKBKB phosphorylation and NF-kappaB activation. Interacts with SASH1. Interacts with ARFIP2. Interacts with FKBP5. In terms of processing, upon cytokine stimulation, phosphorylated on Ser-177 and Ser-181 by MEKK1 and/or MAP3K14/NIK as well as TBK1 and PRKCZ; which enhances activity. Phosphorylated by MAP3K7/TAK1 in response to NOD1 and NOD2 signaling, promoting activation and phosphorylation of NF-kappa-B inhibitors, leading to NF-kappa-B activation. Once activated, autophosphorylates on the C-terminal serine cluster; which decreases activity and prevents prolonged activation of the inflammatory response. Phosphorylated by the IKK-related kinases TBK1 and IKBKE, which is associated with reduced CHUK/IKKA and IKBKB activity and NF-kappa-B-dependent gene transcription. Dephosphorylated at Ser-177 and Ser-181 by PPM1A and PPM1B. Post-translationally, ubiquitinated. Monoubiquitination involves TRIM21 that leads to inhibition of Tax-induced NF-kappa-B signaling. 'Ser-163' may not serve as a monoubiquitination site. Ubiquitination on 'Ser-163' may modulate phosphorylation on C-terminal serine residues. Hydroxylated by PHD1/EGLN2, loss of hydroxylation under hypoxic conditions results in activation of NF-kappa-B.

It localises to the cytoplasm. The protein localises to the nucleus. Its subcellular location is the membrane raft. It catalyses the reaction L-seryl-[I-kappa-B protein] + ATP = O-phospho-L-seryl-[I-kappa-B protein] + ADP + H(+). It carries out the reaction L-seryl-[protein] + ATP = O-phospho-L-seryl-[protein] + ADP + H(+). The catalysed reaction is L-threonyl-[protein] + ATP = O-phospho-L-threonyl-[protein] + ADP + H(+). Its function is as follows. Serine kinase that plays an essential role in the NF-kappa-B signaling pathway which is activated by multiple stimuli such as inflammatory cytokines, bacterial or viral products, DNA damages or other cellular stresses. Acts as a part of the canonical IKK complex in the conventional pathway of NF-kappa-B activation. Phosphorylates inhibitors of NF-kappa-B on 2 critical serine residues. These modifications allow polyubiquitination of the inhibitors and subsequent degradation by the proteasome. In turn, free NF-kappa-B is translocated into the nucleus and activates the transcription of hundreds of genes involved in immune response, growth control, or protection against apoptosis. In addition to the NF-kappa-B inhibitors, phosphorylates several other components of the signaling pathway including NEMO/IKBKG, NF-kappa-B subunits RELA and NFKB1, as well as IKK-related kinases TBK1 and IKBKE. IKK-related kinase phosphorylations may prevent the overproduction of inflammatory mediators since they exert a negative regulation on canonical IKKs. Phosphorylates FOXO3, mediating the TNF-dependent inactivation of this pro-apoptotic transcription factor. Also phosphorylates other substrates including NAA10, NCOA3, BCL10 and IRS1. Phosphorylates RIPK1 at 'Ser-25' which represses its kinase activity and consequently prevents TNF-mediated RIPK1-dependent cell death. Phosphorylates the C-terminus of IRF5, stimulating IRF5 homodimerization and translocation into the nucleus. This Rattus norvegicus (Rat) protein is Inhibitor of nuclear factor kappa-B kinase subunit beta (Ikbkb).